A 249-amino-acid polypeptide reads, in one-letter code: ATP synthase subunit a (249 aa).

6 helical membrane passes run 26-46 (FTNVSAFMVATVVLASGFLYL), 84-104 (FFPFVFSLFMFVLVANFIGLF), 114-134 (IIVTFALSLLVIGTVIFYGFF), 143-163 (LFVPSGVPGIIVPLVVLIEII), 185-205 (ITLKVFAGFVVSLSSLGALGI), and 208-228 (AVLPLLMTVAITALEFLVAFL).

This sequence belongs to the ATPase A chain family. In terms of assembly, F-type ATPases have 2 components, CF(1) - the catalytic core - and CF(0) - the membrane proton channel. CF(1) has five subunits: alpha(3), beta(3), gamma(1), delta(1), epsilon(1). CF(0) has three main subunits: a(1), b(2) and c(9-12). The alpha and beta chains form an alternating ring which encloses part of the gamma chain. CF(1) is attached to CF(0) by a central stalk formed by the gamma and epsilon chains, while a peripheral stalk is formed by the delta and b chains.

Its subcellular location is the cell inner membrane. Key component of the proton channel; it plays a direct role in the translocation of protons across the membrane. This chain is ATP synthase subunit a, found in Brucella canis (strain ATCC 23365 / NCTC 10854 / RM-666).